A 573-amino-acid polypeptide reads, in one-letter code: NADH-ubiquinone oxidoreductase chain 5 (573 aa).

Transmembrane regions (helical) follow at residues 4-24 (ISFINLISISLTCFLLSLYYL), 44-64 (IVMTFLFDWMSLLFMSFVLMI), 85-105 (FIMLVLMFVLSMMLLIISPNL), 106-126 (VSILLGWDGLGLVSYCLVIYF), 147-167 (VALLLAIAWMLNYGSWNYIFY), 170-190 (VMQNEFSMLMIGSLVMLAAMT), 212-234 (SALVHSSTLVTAGVYLLIRFNIV), 239-259 (WLGQLLLLLSGLTMFMAGLGA), 268-288 (IIALSTLSQLGLMMSILSMGF), 294-314 (FHLLTHALFKALLFMCAGAII), 337-357 (SACFNVSNLALCGMPFLAGFY), 377-396 (FLYFFSTGLTVSYSFRLVYY), 422-442 (LGLLFMSIIGGSMLNWLIFPF), 452-472 (LKMLTLFVCIVGGLFGYLISI), 487-507 (LTLFLGSMWFMPYISTYGMIF), and 552-572 (LKIYLMLFVFWIMILFSFLLF).

The protein belongs to the complex I subunit 5 family.

The protein resides in the mitochondrion inner membrane. It catalyses the reaction a ubiquinone + NADH + 5 H(+)(in) = a ubiquinol + NAD(+) + 4 H(+)(out). Core subunit of the mitochondrial membrane respiratory chain NADH dehydrogenase (Complex I) that is believed to belong to the minimal assembly required for catalysis. Complex I functions in the transfer of electrons from NADH to the respiratory chain. The immediate electron acceptor for the enzyme is believed to be ubiquinone. This Drosophila yakuba (Fruit fly) protein is NADH-ubiquinone oxidoreductase chain 5 (mt:ND5).